Consider the following 363-residue polypeptide: Peroxidase (363 aa).

An N-terminal signal peptide occupies residues 1–20 (MKLSLLSTFAAVIIGALALP). At Q21 the chain carries Pyrrolidone carboxylic acid. 4 disulfide bridges follow: C31–C43, C42–C312, C62–C148, and C276–C341. Catalysis depends on H75, which acts as the Proton acceptor. Positions 76, 94, 96, and 98 each coordinate Ca(2+). N-linked (GlcNAc...) (high mannose) asparagine glycosylation is present at N162. H203 provides a ligand contact to heme b. Residues S204, D221, T223, V226, and D228 each coordinate Ca(2+). A glycan (O-linked (Man...) serine) is linked at S358.

The protein belongs to the peroxidase family. Ligninase subfamily. Requires Ca(2+) as cofactor. Heme b serves as cofactor.

The protein resides in the secreted. It carries out the reaction 2 a phenolic donor + H2O2 = 2 a phenolic radical donor + 2 H2O. The sequence is that of Peroxidase (CIP1) from Coprinopsis cinerea (strain Okayama-7 / 130 / ATCC MYA-4618 / FGSC 9003) (Inky cap fungus).